We begin with the raw amino-acid sequence, 410 residues long: Peptidase T (410 aa).

Zn(2+) is bound at residue His-79. Residue Asp-81 is part of the active site. Residue Asp-142 coordinates Zn(2+). Glu-176 acts as the Proton acceptor in catalysis. Zn(2+)-binding residues include Glu-177, Asp-199, and His-381.

Belongs to the peptidase M20B family. It depends on Zn(2+) as a cofactor.

Its subcellular location is the cytoplasm. It catalyses the reaction Release of the N-terminal residue from a tripeptide.. Cleaves the N-terminal amino acid of tripeptides. This is Peptidase T from Listeria monocytogenes serotype 4b (strain CLIP80459).